A 303-amino-acid polypeptide reads, in one-letter code: Nodulation protein D (303 aa).

The 58-residue stretch at 6-63 folds into the HTH lysR-type domain; it reads LDLNLLVALDALMTERKLTAAARSINLSQPAMSAAISRLRDYFRDDLFIMQRRELVPT. Residues 23-42 constitute a DNA-binding region (H-T-H motif); it reads LTAAARSINLSQPAMSAAIS.

The protein belongs to the LysR transcriptional regulatory family.

In terms of biological role, nodD regulates the expression of the nodABCFE genes which encode other nodulation proteins. NodD is also a negative regulator of its own expression. Binds flavonoids as inducers. In Rhizobium leguminosarum bv. viciae, this protein is Nodulation protein D (nodD).